The chain runs to 318 residues: Beta-ketoacyl-[acyl-carrier-protein] synthase III (318 aa).

Active-site residues include cysteine 112 and histidine 245. Residues 246-250 (QANLR) form an ACP-binding region. Asparagine 275 is an active-site residue.

This sequence belongs to the thiolase-like superfamily. FabH family. Homodimer.

Its subcellular location is the cytoplasm. The catalysed reaction is malonyl-[ACP] + acetyl-CoA + H(+) = 3-oxobutanoyl-[ACP] + CO2 + CoA. It participates in lipid metabolism; fatty acid biosynthesis. Its function is as follows. Catalyzes the condensation reaction of fatty acid synthesis by the addition to an acyl acceptor of two carbons from malonyl-ACP. Catalyzes the first condensation reaction which initiates fatty acid synthesis and may therefore play a role in governing the total rate of fatty acid production. Possesses both acetoacetyl-ACP synthase and acetyl transacylase activities. Its substrate specificity determines the biosynthesis of branched-chain and/or straight-chain of fatty acids. This is Beta-ketoacyl-[acyl-carrier-protein] synthase III from Blochmanniella floridana.